A 172-amino-acid chain; its full sequence is Small ribosomal subunit protein uS5 (172 aa).

One can recognise an S5 DRBM domain in the interval 16 to 79 (LKDRLVAINR…ESAKKNLTRV (64 aa)).

This sequence belongs to the universal ribosomal protein uS5 family. In terms of assembly, part of the 30S ribosomal subunit. Contacts proteins S4 and S8.

Functionally, with S4 and S12 plays an important role in translational accuracy. In terms of biological role, located at the back of the 30S subunit body where it stabilizes the conformation of the head with respect to the body. This Bacteroides fragilis (strain ATCC 25285 / DSM 2151 / CCUG 4856 / JCM 11019 / LMG 10263 / NCTC 9343 / Onslow / VPI 2553 / EN-2) protein is Small ribosomal subunit protein uS5.